A 425-amino-acid chain; its full sequence is Proline iminopeptidase (425 aa).

Residues 52 to 315 form the AB hydrolase-1 domain; the sequence is PWLLYLQGGP…EFPALAWAQG (264 aa). Ser-146 (nucleophile) is an active-site residue. Asp-351 is a catalytic residue. His-404 serves as the catalytic Proton donor.

This sequence belongs to the peptidase S33 family. In terms of assembly, homotetramer.

Its subcellular location is the cytoplasm. It catalyses the reaction Release of N-terminal proline from a peptide.. Functionally, higher activity toward long peptides. Acts on hydroxyproline beta-naphthylamide with almost as high an activity as on proline beta-naphthylamide. In Aeromonas sobria, this protein is Proline iminopeptidase (pip).